We begin with the raw amino-acid sequence, 304 residues long: Ribosomal RNA small subunit methyltransferase H (304 aa).

Residues 37–39 (AGH), Asp-57, Phe-79, Asp-100, and His-107 contribute to the S-adenosyl-L-methionine site.

This sequence belongs to the methyltransferase superfamily. RsmH family.

Its subcellular location is the cytoplasm. It catalyses the reaction cytidine(1402) in 16S rRNA + S-adenosyl-L-methionine = N(4)-methylcytidine(1402) in 16S rRNA + S-adenosyl-L-homocysteine + H(+). Its function is as follows. Specifically methylates the N4 position of cytidine in position 1402 (C1402) of 16S rRNA. This chain is Ribosomal RNA small subunit methyltransferase H, found in Bacteroides thetaiotaomicron (strain ATCC 29148 / DSM 2079 / JCM 5827 / CCUG 10774 / NCTC 10582 / VPI-5482 / E50).